The primary structure comprises 456 residues: Chordin-like protein 1 (456 aa).

A signal peptide spans 1–27 (MRKKWKMGGMKYIFSLLFFLLLEGGKT). VWFC domains lie at 35 to 100 (TYCM…PRCP) and 113 to 179 (KSCE…RVCR). N118 carries N-linked (GlcNAc...) asparagine glycosylation. A Cell attachment site motif is present at residues 179–181 (RGD). Positions 202 to 223 (ARHSYHRSHYDPPPSRQAGGLS) are disordered. The region spanning 258-323 (QVCVSNGKTY…IDGKCCKVCP (66 aa)) is the VWFC 3 domain. N-linked (GlcNAc...) asparagine glycosylation is present at N291.

As to expression, expressed in the developing cornea and in the eye anterior segment in addition to the retina. Differentially expressed in the fetal brain. There is high expression in cerebellum and neocortex. Expressed in retinal pericytes.

Its subcellular location is the secreted. In terms of biological role, antagonizes the function of BMP4 by binding to it and preventing its interaction with receptors. Alters the fate commitment of neural stem cells from gliogenesis to neurogenesis. Contributes to neuronal differentiation of neural stem cells in the brain by preventing the adoption of a glial fate. May play a crucial role in dorsoventral axis formation. May play a role in embryonic bone formation. May also play an important role in regulating retinal angiogenesis through modulation of BMP4 actions in endothelial cells. Plays a role during anterior segment eye development. This chain is Chordin-like protein 1 (CHRDL1), found in Homo sapiens (Human).